Consider the following 396-residue polypeptide: Subtilisin-like protease 5 (396 aa).

The signal sequence occupies residues 1-20; sequence MTGFFTFLSFSLAALSVTNA. A propeptide spanning residues 21–116 is cleaved from the precursor; that stretch reads AHILSVPKGA…VEPDAIISQH (96 aa). An Inhibitor I9 domain is found at 37–113; sequence YIVVMKDDTS…VAFVEPDAII (77 aa). The N-linked (GlcNAc...) asparagine glycan is linked to N63. A Peptidase S8 domain is found at 125–396; it reads PWGLSRLSNR…SRLLYNGSGR (272 aa). Active-site charge relay system residues include D156 and H187. 2 N-linked (GlcNAc...) asparagine glycosylation sites follow: N230 and N248. The active-site Charge relay system is S342. Polar residues predominate over residues 376–389; sequence PTIRNPGPDTTSRL. Residues 376–396 form a disordered region; that stretch reads PTIRNPGPDTTSRLLYNGSGR. The N-linked (GlcNAc...) asparagine glycan is linked to N392.

The protein belongs to the peptidase S8 family.

The protein localises to the secreted. In terms of biological role, secreted subtilisin-like serine protease with keratinolytic activity that contributes to pathogenicity. The sequence is that of Subtilisin-like protease 5 (SUB5) from Trichophyton tonsurans (Scalp ringworm fungus).